Consider the following 866-residue polypeptide: Protein aubergine (866 aa).

Methionine 1 carries the N-acetylmethionine modification. The interval 1 to 61 (MNLPPNPVIA…GGGDAQVGPS (61 aa)) is disordered. A symmetric dimethylarginine mark is found at arginine 11, arginine 13, arginine 15, and arginine 17. Gly residues predominate over residues 46–56 (ASGGNGGGGDA). Positions 281–390 (TLYNILSDAI…IIPELARATG (110 aa)) constitute a PAZ domain. The Piwi domain maps to 555–852 (IVMVVMRSPN…LAFLVAESIN (298 aa)).

The protein belongs to the argonaute family. Piwi subfamily. Component of the ping-pong piRNA processing (4P) complex consisting of krimp, aub and AGO3. Interacts (via N-terminus when symmetrically dimethylated on arginine residues) with krimp (via tudor domain); this interaction requires methylation of at least one N-terminal arginie residue. Interacts with vas and AGO3. May form part of a piRNA processing complex consisting of tud, aub and AGO3. Interacts (when symmetrically dimethylated on arginine residues) with tud; methylation and/or interaction requires association with piRNA. Interacts (via N-terminus and when associated with piRNA) with csul/PRMT5; the interaction recruits the PRMT5 methylosome complex to modify N-terminal arginines by symmetrical dimethylation but involves residues other than the arginines to be modified. Forms a complex with smg, twin, AGO3, nanos mRNA and piRNAs that targets the nanos 3'-untranslated region, in early embryos. Interacts with nanos mRNA and rump (in an RNA-dependent manner). Interacts with papi and vret. Interacts with me31B. Symmetrical dimethylation of arginines (sDMA) on Arg-11, Arg-13 and/or Arg-15 by csul/PRMT5/DART5, is required for binding to tud, localization to the pole plasm and association with the correct piRNAs. SDMA on Arg-11, Arg-13, Arg-15 and/or Arg-17 is required for binding to krimp and stable recruitment to subregions of the nuage. Methylation state does not affect protein stability. SDMA plays an important role in ping-pong amplification of piRNAs and is essential for function in vivo. Methylation state functions as an indicator of its piRNA binding state. PiRNA binding promotes sDMA modification; piRNA binding induces a conformational change that exposes the N-terminal arginines, making them available to the methylosome complex. In terms of tissue distribution, expressed in ovary. In the germarium, found in germline stem and cyst cells. In egg chambers from stage 6, expressed both in nurse cells and oocytes. In embryos, accumulates in the pole cells, although low expression is detected throughout the entire embryo. In testis, expressed in germline stem cells, gonialblast and spermatogonia cells (at protein level). In the adult brain, expressed in the ellipsoid body, the mushroom body subdivision in the peduncle and the cell body layer. Expressed specifically in alpha'/beta' and gamma neurons.

It localises to the cytoplasm. Its subcellular location is the cytosol. The protein localises to the perinuclear region. It is found in the cytoplasmic ribonucleoprotein granule. Component of the perinuclear meiotic nuage, a germline-specific subcellular membraneless ribonucleoprotein compartment involved in production of transposable element-repressing Piwi-interacting RNA (piRNA)-induced silencing complexes (piRISCs), which are essential for maintaining germline integrity during oogenesis; essential for the formation and/or structural integrity of nuage particles. Acts via the Piwi-interacting RNA (piRNA) metabolic process, which mediates the repression of transposable elements during meiosis by forming complexes composed of piRNAs and Piwi proteins and governs the methylation and subsequent repression of transposons. Directly binds piRNAs, a class of 24 to 30 nucleotide RNAs that are generated by a Dicer-independent mechanism and are primarily derived from transposons and other repeated sequence elements. Shows RNA cleavage or slicer activity; including aub-piRNA complexes from ovary and testis. When loaded with guide piRNAs recognizes and cleaves complementary RNAs to repress their expression and produce complementary piRNAs. Together with Piwi protein AGO3 recruited to subregions of the perinuclear nuage by krimp, which coordinates their activity in the ping-pong amplification step of secondary piRNA biogenesis. Krimp recruits piRNA bound aub and unbound AGO3, bringing them into close proximity to facilitate the loading onto AGO3 of freshly cut piRNAs generated by aub cleavage of target sequences; krimp recognizes the piRNA loading state of the Piwi proteins via symmetrically dimethylated arginine modification in their N-terminus. Important for asymmetric ping-pong amplification to bias production towards antisense piRNAs capable of silencing transposable elements. Required for the localization of mael and krimp to the meiotic nuage. In ovary, associates predominantly with antisense piRNAs that contain uridine at their 5' end. In testis, associates with Su(Ste) antisense piRNAs (most abundant class of piRNAs found in complex with aub in testes) and negatively regulates Ste expression, most likely by cleaving its transcripts. Also in testis, may repress translation of vas when associated with a piRNA derived from chromosome X, termed AT-chX-1, whose sequence shows strong complementarity to vas mRNA. Involved in repression of long interspersed nuclear elements (LINEs) including HeT-A, I-element and TART LINEs. Repression of specialized telomeric retroelements HeT-A and TART is involved in telomere regulation; Drosophila telomeres being maintained by transposition of specialized telomeric retroelements. Also involved in telomeric trans-silencing, a repression mechanism by which a transposon or a transgene inserted in subtelomeric heterochromatin has the capacity to repress in trans, in the female germline, a homologous transposon, or transgene located in euchromatin. Involved in the suppression of meiotic drive of sex chromosomes and autosomes. Involved in transposon silencing in the adult brain. Required for dorsal-ventral as well as anterior-posterior patterning of the egg. Required during oogenesis for primordial germ cell formation and activation of RNA interference. During early oogenesis, required for osk mRNA silencing and polarization of the microtubule cytoskeleton. During mid-oogenesis, required for osk mRNA localization to the posterior pole and efficient translation of osk and grk. During embryogenesis, required for posterior localization of nanos (nos) mRNA, independently of osk, and pole cell formation. Forms a complex with smg, twin, AGO3 and specific piRNAs that targets nanos mRNA (and probably other maternal mRNAS) for deadenylation promoting its decay during early embryogenesis. In Drosophila melanogaster (Fruit fly), this protein is Protein aubergine.